Consider the following 417-residue polypeptide: Carboxypeptidase A2 (417 aa).

Residues 1–16 form the signal peptide; it reads MRLTLLLAALLGYIYC. Positions 17–112 are cleaved as a propeptide — activation peptide; it reads QETFVGDQVL…EMLFNQQRER (96 aa). Residues 120-412 enclose the Peptidase M14 domain; that stretch reads AYHTLEEIYQ…LGLKTIMEHV (293 aa). Positions 177 and 180 each coordinate Zn(2+). Residues 177 to 180, Arg235, and 252 to 253 contribute to the substrate site; these read HARE and NR. A disulfide bridge connects residues Cys246 and Cys269. Residue His304 coordinates Zn(2+). 305–306 contributes to the substrate binding site; that stretch reads SY. A disulfide bridge links Cys318 with Cys352. Tyr356 is a substrate binding site. The active-site Proton donor/acceptor is the Glu378.

It belongs to the peptidase M14 family. The cofactor is Zn(2+).

It localises to the secreted. The enzyme catalyses Similar to that of carboxypeptidase A (EC 3.4.17.1), but with a preference for bulkier C-terminal residues.. Carboxypeptidase that catalyzes the release of a C-terminal amino acid, with a preference for large aromatic C-terminal residues. The protein is Carboxypeptidase A2 (Cpa2) of Rattus norvegicus (Rat).